Consider the following 278-residue polypeptide: MANYTAADVKKLRELTGAGMMDCKKALDEADGNVDKAVEALRIKGQKGVAKREGRSAENGAVVSLISEDQTSGVLLELKCETDFVAKGDKFQAVANTLAAHVAATSPADIEALLASEIEAGKTVQAYVDEANANLGEKIVLDRFAQFTGAYVGVYMHRTMPDLPPQIGVLVELDKADAELAKGIAQHIAAFAPKYLSREDVPAEVVEAERRVAEETTRAEGKPEAALPKIVEGRVNGFFKEATLLGQPYALDAKKSVQKVLDEAGVTLKRFSRIKVGI.

An involved in Mg(2+) ion dislocation from EF-Tu region spans residues 82 to 85; the sequence is TDFV.

The protein belongs to the EF-Ts family.

It localises to the cytoplasm. Associates with the EF-Tu.GDP complex and induces the exchange of GDP to GTP. It remains bound to the aminoacyl-tRNA.EF-Tu.GTP complex up to the GTP hydrolysis stage on the ribosome. This chain is Elongation factor Ts, found in Streptomyces griseus subsp. griseus (strain JCM 4626 / CBS 651.72 / NBRC 13350 / KCC S-0626 / ISP 5235).